The following is a 260-amino-acid chain: Ribonuclease PH (260 aa).

Phosphate is bound by residues arginine 88 and 126–128 (GTR).

This sequence belongs to the RNase PH family. As to quaternary structure, homohexameric ring arranged as a trimer of dimers.

It catalyses the reaction tRNA(n+1) + phosphate = tRNA(n) + a ribonucleoside 5'-diphosphate. Functionally, phosphorolytic 3'-5' exoribonuclease that plays an important role in tRNA 3'-end maturation. Removes nucleotide residues following the 3'-CCA terminus of tRNAs; can also add nucleotides to the ends of RNA molecules by using nucleoside diphosphates as substrates, but this may not be physiologically important. Probably plays a role in initiation of 16S rRNA degradation (leading to ribosome degradation) during starvation. This is Ribonuclease PH from Mycobacterium sp. (strain JLS).